The sequence spans 1946 residues: Integrin beta-like protein E (1946 aa).

The signal sequence occupies residues 1–22 (MNNLFKFLFVLLAIFCPPISDL). Residues 23–1875 (VVSHGVPQQH…ATTQTTNNKT (1853 aa)) are Extracellular-facing. N-linked (GlcNAc...) asparagine glycosylation is found at Asn107, Asn134, and Asn203. The 38-residue stretch at 423 to 460 (YGQNCDPTPPCDKGIPNEGILGDGKCMCINGYSGDKCD) folds into the EGF-like domain. 2 disulfides stabilise this stretch: Cys433–Cys448 and Cys450–Cys459. In terms of domain architecture, VWFA spans 514 to 699 (DVFVLVDVNV…AGLKSVLSNV (186 aa)). N-linked (GlcNAc...) asparagine glycans are attached at residues Asn705, Asn860, Asn1043, Asn1113, Asn1177, Asn1374, Asn1401, Asn1513, Asn1611, Asn1620, Asn1662, Asn1671, Asn1737, Asn1743, Asn1762, Asn1812, Asn1852, and Asn1873. The chain crosses the membrane as a helical span at residues 1876–1896 (VLTGAIAGAAAGTALIAAAAW). At 1897–1946 (KLLRKAAPPTDTFFSEAAFLGDGVNANPLYEQSASAAENPLYQSASDNTD) the chain is on the cytoplasmic side.

It belongs to the SIB family. In terms of assembly, interacts with talA/talin.

Its subcellular location is the membrane. In terms of biological role, implicated in cellular adhesion. The protein is Integrin beta-like protein E (sibE) of Dictyostelium discoideum (Social amoeba).